The following is a 468-amino-acid chain: Argininosuccinate lyase (468 aa).

It belongs to the lyase 1 family. Argininosuccinate lyase subfamily.

The protein localises to the cytoplasm. It carries out the reaction 2-(N(omega)-L-arginino)succinate = fumarate + L-arginine. Its pathway is amino-acid biosynthesis; L-arginine biosynthesis; L-arginine from L-ornithine and carbamoyl phosphate: step 3/3. The chain is Argininosuccinate lyase from Hahella chejuensis (strain KCTC 2396).